The chain runs to 248 residues: MPRGKRRAADTISDNMDHGQPKRARTSYTSIPTQQSSRRHIRLEDGFSQKRCMAWFQEYTTPDEPETLGPDGMEKFCEDIGVEPENIVMLVLAYKMGATQMGFFSQQEWLKGLTELDCDSAAKMVVKLDYLRSILNDPNSFKSIYRYAYDFAKDSDQRCMDILTAKAMLQLLLGKHWPLYPQFAQFLEQSKYKAINKDQWCNILEFSRTISIDLSNYDIDGAWPVMLDEFVEWLRLQRSQVTSTTGSS.

The disordered stretch occupies residues 1–35 (MPRGKRRAADTISDNMDHGQPKRARTSYTSIPTQQ). A compositionally biased stretch (polar residues) spans 26–35 (TSYTSIPTQQ). A DCUN1 domain is found at 47-235 (FSQKRCMAWF…MLDEFVEWLR (189 aa)).

The protein resides in the nucleus. Its function is as follows. Inhibits neddylation of cullin components of SCF-type E3 ubiquitin ligase complexes and thus regulates SCF-type complex activity. Essential for development. Function inhibits cell proliferation and cell growth. The protein is DCN1-like protein 4 of Drosophila melanogaster (Fruit fly).